The chain runs to 121 residues: Small ribosomal subunit protein bS6 (121 aa).

This sequence belongs to the bacterial ribosomal protein bS6 family.

In terms of biological role, binds together with bS18 to 16S ribosomal RNA. The protein is Small ribosomal subunit protein bS6 of Rickettsia peacockii (strain Rustic).